The primary structure comprises 209 residues: Large ribosomal subunit protein uL3 (209 aa).

Positions 126 to 148 (HGQSRGPMAHGSRYHRRPGSMGP) are disordered.

This sequence belongs to the universal ribosomal protein uL3 family. In terms of assembly, part of the 50S ribosomal subunit. Forms a cluster with proteins L14 and L19.

One of the primary rRNA binding proteins, it binds directly near the 3'-end of the 23S rRNA, where it nucleates assembly of the 50S subunit. This is Large ribosomal subunit protein uL3 from Listeria monocytogenes serotype 4b (strain CLIP80459).